A 255-amino-acid polypeptide reads, in one-letter code: MSRISDAFQKRKSLIAYITVGYPDIETTLRLVPLLEENGVDIIELGIPFSDPLADGVTIQNASYQALQNGVTPEVCLSVAALLKEKISIPMVFMGYYNPIYNYGLTKFCQKCATAGVSGFIIPDLPPGEAQDIDFAAREAGLDIIFLLAPTSTDERIKLVAAKSRGFIYLVSHSGVTGATANLPADLSSFVNRVRKTARQPLAVGFGISTPEQAQNIAKFSDGIIVGSRILQLVQTDPSLEKVATFIRQLRQSLD.

Residues glutamate 44 and aspartate 55 each act as proton acceptor in the active site.

The protein belongs to the TrpA family. Tetramer of two alpha and two beta chains.

The enzyme catalyses (1S,2R)-1-C-(indol-3-yl)glycerol 3-phosphate + L-serine = D-glyceraldehyde 3-phosphate + L-tryptophan + H2O. Its pathway is amino-acid biosynthesis; L-tryptophan biosynthesis; L-tryptophan from chorismate: step 5/5. The alpha subunit is responsible for the aldol cleavage of indoleglycerol phosphate to indole and glyceraldehyde 3-phosphate. This Dehalococcoides mccartyi (strain ATCC BAA-2100 / JCM 16839 / KCTC 5957 / BAV1) protein is Tryptophan synthase alpha chain.